The following is a 295-amino-acid chain: 4-hydroxy-tetrahydrodipicolinate synthase (295 aa).

A pyruvate-binding site is contributed by Thr46. Residue Tyr134 is the Proton donor/acceptor of the active site. Lys162 serves as the catalytic Schiff-base intermediate with substrate. Ile205 lines the pyruvate pocket.

It belongs to the DapA family. In terms of assembly, homotetramer; dimer of dimers.

It localises to the cytoplasm. It catalyses the reaction L-aspartate 4-semialdehyde + pyruvate = (2S,4S)-4-hydroxy-2,3,4,5-tetrahydrodipicolinate + H2O + H(+). It participates in amino-acid biosynthesis; L-lysine biosynthesis via DAP pathway; (S)-tetrahydrodipicolinate from L-aspartate: step 3/4. Catalyzes the condensation of (S)-aspartate-beta-semialdehyde [(S)-ASA] and pyruvate to 4-hydroxy-tetrahydrodipicolinate (HTPA). This chain is 4-hydroxy-tetrahydrodipicolinate synthase, found in Anaeromyxobacter dehalogenans (strain 2CP-C).